Here is a 409-residue protein sequence, read N- to C-terminus: Phosphatidylserine decarboxylase proenzyme, mitochondrial (409 aa).

Residues 1 to 52 (MAASVCRPYVRSLPGVMPWRSSSCHYEYTAMHHFLGSFQKLPFEPFNTGARK) constitute a mitochondrion transit peptide. The Mitochondrial matrix portion of the chain corresponds to 53–63 (IHTAPVRSLFL). A helical transmembrane segment spans residues 64–82 (LRPVPILLATGGGYAGYRQ). The Mitochondrial intermembrane segment spans residues 83–409 (YEKYRDQKLE…IRFGEALGSL (327 aa)). Catalysis depends on charge relay system; for autoendoproteolytic cleavage activity residues aspartate 191, histidine 267, and serine 378. Residue serine 378 is the Schiff-base intermediate with substrate; via pyruvic acid; for decarboxylase activity of the active site. Serine 378 bears the Pyruvic acid (Ser); by autocatalysis mark.

Belongs to the phosphatidylserine decarboxylase family. PSD-B subfamily. Eukaryotic type I sub-subfamily. As to quaternary structure, heterodimer of a large membrane-associated beta subunit and a small pyruvoyl-containing alpha subunit. It depends on pyruvate as a cofactor. In terms of processing, is synthesized initially as an inactive proenzyme. Formation of the active enzyme involves a self-maturation process in which the active site pyruvoyl group is generated from an internal serine residue via an autocatalytic post-translational modification. Two non-identical subunits are generated from the proenzyme in this reaction, and the pyruvate is formed at the N-terminus of the alpha chain, which is derived from the carboxyl end of the proenzyme. The autoendoproteolytic cleavage occurs by a canonical serine protease mechanism, in which the side chain hydroxyl group of the serine supplies its oxygen atom to form the C-terminus of the beta chain, while the remainder of the serine residue undergoes an oxidative deamination to produce ammonia and the pyruvoyl prosthetic group on the alpha chain. During this reaction, the Ser that is part of the protease active site of the proenzyme becomes the pyruvoyl prosthetic group, which constitutes an essential element of the active site of the mature decarboxylase.

It localises to the mitochondrion inner membrane. The protein localises to the cytoplasm. It is found in the lipid droplet. The enzyme catalyses a 1,2-diacyl-sn-glycero-3-phospho-L-serine + H(+) = a 1,2-diacyl-sn-glycero-3-phosphoethanolamine + CO2. The protein operates within phospholipid metabolism; phosphatidylethanolamine biosynthesis. Its function is as follows. Catalyzes the formation of phosphatidylethanolamine (PtdEtn) from phosphatidylserine (PtdSer). Plays a central role in phospholipid metabolism and in the interorganelle trafficking of phosphatidylserine. May be involved in lipid droplet biogenesis at the endoplasmic reticulum membrane. The protein is Phosphatidylserine decarboxylase proenzyme, mitochondrial of Cricetulus griseus (Chinese hamster).